The sequence spans 346 residues: Inositol 2-dehydrogenase/D-chiro-inositol 3-dehydrogenase (346 aa).

A compositionally biased stretch (basic and acidic residues) spans 322–331 (GREESIELPK). The interval 322–346 (GREESIELPKKPAFYQHSAATPEQV) is disordered.

The protein belongs to the Gfo/Idh/MocA family. In terms of assembly, homotetramer.

It catalyses the reaction myo-inositol + NAD(+) = scyllo-inosose + NADH + H(+). The catalysed reaction is 1D-chiro-inositol + NAD(+) = scyllo-inosine + NADH + H(+). It participates in polyol metabolism; myo-inositol degradation into acetyl-CoA; acetyl-CoA from myo-inositol: step 1/7. Its function is as follows. Involved in the oxidation of myo-inositol (MI) and D-chiro-inositol (DCI) to 2-keto-myo-inositol (2KMI or 2-inosose) and 1-keto-D-chiro-inositol (1KDCI), respectively. The sequence is that of Inositol 2-dehydrogenase/D-chiro-inositol 3-dehydrogenase from Shouchella clausii (strain KSM-K16) (Alkalihalobacillus clausii).